The chain runs to 754 residues: 1,4-alpha-glucan branching enzyme GlgB (754 aa).

Residue Asp-431 is the Nucleophile of the active site. Glu-484 acts as the Proton donor in catalysis.

It belongs to the glycosyl hydrolase 13 family. GlgB subfamily. As to quaternary structure, monomer.

It carries out the reaction Transfers a segment of a (1-&gt;4)-alpha-D-glucan chain to a primary hydroxy group in a similar glucan chain.. The protein operates within glycan biosynthesis; glycogen biosynthesis. Catalyzes the formation of the alpha-1,6-glucosidic linkages in glycogen by scission of a 1,4-alpha-linked oligosaccharide from growing alpha-1,4-glucan chains and the subsequent attachment of the oligosaccharide to the alpha-1,6 position. The sequence is that of 1,4-alpha-glucan branching enzyme GlgB from Prochlorococcus marinus subsp. pastoris (strain CCMP1986 / NIES-2087 / MED4).